Consider the following 657-residue polypeptide: UvrABC system protein B (657 aa).

The region spanning 23–414 (KSIKKGNKYQ…KENIFHQIMR (392 aa)) is the Helicase ATP-binding domain. 36–43 (GVTGSGKT) contributes to the ATP binding site. The Beta-hairpin motif lies at 89-112 (YYDYYQPEAYIPRTDVFIEKDSST). The Helicase C-terminal domain maps to 431–593 (QVEILFDEAK…ITPTSVKRHI (163 aa)). In terms of domain architecture, UVR spans 622–657 (AKLAKELRKQMLEAAKALEFEKAAAIRDEINKLRDL).

Belongs to the UvrB family. In terms of assembly, forms a heterotetramer with UvrA during the search for lesions. Interacts with UvrC in an incision complex.

The protein localises to the cytoplasm. Its function is as follows. The UvrABC repair system catalyzes the recognition and processing of DNA lesions. A damage recognition complex composed of 2 UvrA and 2 UvrB subunits scans DNA for abnormalities. Upon binding of the UvrA(2)B(2) complex to a putative damaged site, the DNA wraps around one UvrB monomer. DNA wrap is dependent on ATP binding by UvrB and probably causes local melting of the DNA helix, facilitating insertion of UvrB beta-hairpin between the DNA strands. Then UvrB probes one DNA strand for the presence of a lesion. If a lesion is found the UvrA subunits dissociate and the UvrB-DNA preincision complex is formed. This complex is subsequently bound by UvrC and the second UvrB is released. If no lesion is found, the DNA wraps around the other UvrB subunit that will check the other stand for damage. The protein is UvrABC system protein B of Campylobacter jejuni (strain RM1221).